The sequence spans 166 residues: Small ribosomal subunit protein uS5 (166 aa).

Residues 11-74 (LQEKLIAVNR…EKARRNMINV (64 aa)) enclose the S5 DRBM domain.

It belongs to the universal ribosomal protein uS5 family. In terms of assembly, part of the 30S ribosomal subunit. Contacts proteins S4 and S8.

With S4 and S12 plays an important role in translational accuracy. Functionally, located at the back of the 30S subunit body where it stabilizes the conformation of the head with respect to the body. The polypeptide is Small ribosomal subunit protein uS5 (Actinobacillus succinogenes (strain ATCC 55618 / DSM 22257 / CCUG 43843 / 130Z)).